The primary structure comprises 184 residues: MTLRKILALTCLLLPMMASAHQFETGQRVPPIGITDRGELVLDKDQFSYKTWNSAQLVGKVRVLQHIAGRTSAKEKNATLIEAIKSAKLPHDRYQTTTIVNTDDAIPGSGMFVRSSLESNKKLYPWSQFIVDSNGVALGAWQLDEESSAVVVLDKDGRVQWAKDGALTPEEVQQVMDLLQKLLK.

Positions 1–20 (MTLRKILALTCLLLPMMASA) are cleaved as a signal peptide.

The protein to H.influenzae HI_0045.

The protein localises to the periplasm. This is an uncharacterized protein from Escherichia coli (strain K12).